We begin with the raw amino-acid sequence, 176 residues long: uncharacterized protein (176 aa).

The segment covering 15-28 has biased composition (polar residues); the sequence is TSSNPPASASQSTG. Disordered regions lie at residues 15 to 100 and 125 to 176; these read TSSN…TSAG and ASLR…NLGA. A compositionally biased stretch (basic and acidic residues) spans 43–52; it reads FIDKVTDKPS.

This is an uncharacterized protein from Homo sapiens (Human).